A 330-amino-acid chain; its full sequence is Ornithine carbamoyltransferase (330 aa).

Carbamoyl phosphate is bound by residues 57 to 60, Gln-84, Arg-108, and 135 to 138; these read STRT and HPTQ. Residues Asn-168, Asp-232, and 236–237 contribute to the L-ornithine site; that span reads SM. Carbamoyl phosphate-binding positions include 273-274 and Arg-318; that span reads CL.

This sequence belongs to the aspartate/ornithine carbamoyltransferase superfamily. OTCase family.

The protein localises to the cytoplasm. The enzyme catalyses carbamoyl phosphate + L-ornithine = L-citrulline + phosphate + H(+). It functions in the pathway amino-acid biosynthesis; L-arginine biosynthesis; L-arginine from L-ornithine and carbamoyl phosphate: step 1/3. In terms of biological role, reversibly catalyzes the transfer of the carbamoyl group from carbamoyl phosphate (CP) to the N(epsilon) atom of ornithine (ORN) to produce L-citrulline. This Alkaliphilus metalliredigens (strain QYMF) protein is Ornithine carbamoyltransferase.